Here is a 513-residue protein sequence, read N- to C-terminus: MKNTQILILDFGSQYTQLLARRVREANIYTEVLPFDTSIEKIKEYPLLKGIILSGGPSSVYLQNAYKIDSEILNLDIAILGVCYGMQLLTQYFQGAVELADEQEFGKAIITIDDKKNPLFKNVTTESQVWMSHADHVTELPVDFKQIAHSNASIAAIAHNTKPIYGIQFHAEVTHSLQGKEMLENFLYDIAKCNKDWNLDDFIDQQIKEIKETVKDKQVILGLSGGVDSSVAAAIIGKAIGKQLTCIFVDTGLLRKNETIEVMKAYETNFDINIKLVEASDLFFSELKGIKEPEAKRKIIGKCFIDVFTDAARQHKDADFLAQGTIYPDVIESSSHGASSKTIKSHHNVGGLPEDLKFRLIEPLRNLFKDEVRQVGFKLGLPEEMINRHPFPGPGLGIRVIEEVTKDKVEILQEADAIFIKKLREWNLYNTVSQAFVTLLPVKTVGVMGDNRTYDYVVALRSVNTIDFMTATSTHLPWEFLDEVVNEIINKVDNVNRVVYDVTSKPPGTIEWE.

Positions 5–196 (QILILDFGSQ…LYDIAKCNKD (192 aa)) constitute a Glutamine amidotransferase type-1 domain. C83 functions as the Nucleophile in the catalytic mechanism. Catalysis depends on residues H170 and E172. In terms of domain architecture, GMPS ATP-PPase spans 197-388 (WNLDDFIDQQ…LGLPEEMINR (192 aa)). An ATP-binding site is contributed by 224–230 (SGGVDSS).

Homodimer.

The enzyme catalyses XMP + L-glutamine + ATP + H2O = GMP + L-glutamate + AMP + diphosphate + 2 H(+). Its pathway is purine metabolism; GMP biosynthesis; GMP from XMP (L-Gln route): step 1/1. Its function is as follows. Catalyzes the synthesis of GMP from XMP. The sequence is that of GMP synthase [glutamine-hydrolyzing] from Mesoplasma florum (strain ATCC 33453 / NBRC 100688 / NCTC 11704 / L1) (Acholeplasma florum).